The chain runs to 411 residues: Serine hydroxymethyltransferase (411 aa).

Residues leucine 113 and 117–119 (GHL) each bind (6S)-5,6,7,8-tetrahydrofolate. Lysine 222 is modified (N6-(pyridoxal phosphate)lysine). (6S)-5,6,7,8-tetrahydrofolate contacts are provided by residues glutamate 238 and 346-348 (SPF).

Belongs to the SHMT family. In terms of assembly, homodimer. It depends on pyridoxal 5'-phosphate as a cofactor.

The protein localises to the cytoplasm. It catalyses the reaction (6R)-5,10-methylene-5,6,7,8-tetrahydrofolate + glycine + H2O = (6S)-5,6,7,8-tetrahydrofolate + L-serine. It functions in the pathway one-carbon metabolism; tetrahydrofolate interconversion. It participates in amino-acid biosynthesis; glycine biosynthesis; glycine from L-serine: step 1/1. In terms of biological role, catalyzes the reversible interconversion of serine and glycine with tetrahydrofolate (THF) serving as the one-carbon carrier. This reaction serves as the major source of one-carbon groups required for the biosynthesis of purines, thymidylate, methionine, and other important biomolecules. Also exhibits THF-independent aldolase activity toward beta-hydroxyamino acids, producing glycine and aldehydes, via a retro-aldol mechanism. This chain is Serine hydroxymethyltransferase, found in Prochlorococcus marinus (strain NATL1A).